The sequence spans 416 residues: Elongation factor 1-gamma 3 (416 aa).

In terms of domain architecture, GST N-terminal spans 1 to 82; the sequence is MALVLHCGSG…YVARLKDNSS (82 aa). The GST C-terminal domain maps to 87–215; sequence SLIDYSHIEQ…FKQAESVPPV (129 aa). Residues 213 to 263 are disordered; sequence PPVQKKAAPPKESKAKEAKKEAPKEAPKPKVEASEEEEAPKPKPKNPLDLL. Residues 221–245 are compositionally biased toward basic and acidic residues; the sequence is PPKESKAKEAKKEAPKEAPKPKVEA. The 161-residue stretch at 256-416 folds into the EF-1-gamma C-terminal domain; it reads PKNPLDLLPP…EDLLDAKCFK (161 aa).

As to quaternary structure, EF-1 is composed of four subunits: alpha, beta, delta, and gamma.

Probably plays a role in anchoring the complex to other cellular components. This chain is Elongation factor 1-gamma 3, found in Oryza sativa subsp. japonica (Rice).